We begin with the raw amino-acid sequence, 155 residues long: Methylated-DNA--protein-cysteine methyltransferase (155 aa).

Cys-119 (nucleophile; methyl group acceptor) is an active-site residue.

This sequence belongs to the MGMT family.

Its subcellular location is the cytoplasm. The enzyme catalyses a 6-O-methyl-2'-deoxyguanosine in DNA + L-cysteinyl-[protein] = S-methyl-L-cysteinyl-[protein] + a 2'-deoxyguanosine in DNA. The catalysed reaction is a 4-O-methyl-thymidine in DNA + L-cysteinyl-[protein] = a thymidine in DNA + S-methyl-L-cysteinyl-[protein]. Its function is as follows. Involved in the cellular defense against the biological effects of O6-methylguanine (O6-MeG) and O4-methylthymine (O4-MeT) in DNA. Repairs the methylated nucleobase in DNA by stoichiometrically transferring the methyl group to a cysteine residue in the enzyme. This is a suicide reaction: the enzyme is irreversibly inactivated. The protein is Methylated-DNA--protein-cysteine methyltransferase of Sulfolobus acidocaldarius (strain ATCC 33909 / DSM 639 / JCM 8929 / NBRC 15157 / NCIMB 11770).